The sequence spans 173 residues: Globin, cuticular isoform (173 aa).

Residues 1 to 16 form the signal peptide; sequence MLWFVAVCFAIASVSA. Residues 17-166 form the Globin domain; sequence MSPADVKKHT…FNSEAQHQLE (150 aa). Histidine 113 lines the heme b pocket.

This sequence belongs to the globin family. Expressed only by adult nematodes in the gut.

Its subcellular location is the secreted. The protein resides in the extracellular space. The sequence is that of Globin, cuticular isoform (GLBC) from Nippostrongylus brasiliensis (Rat hookworm).